An 86-amino-acid chain; its full sequence is MNFQPLGKRILVKRLEEMKTTASGIIIPDNAKEKPLNGEVAAVSKEIEDVKVNDKVMFAKYGGTEIKLDNEEYLVLNIEDVLGIIK.

This sequence belongs to the GroES chaperonin family. As to quaternary structure, heptamer of 7 subunits arranged in a ring. Interacts with the chaperonin GroEL.

It is found in the cytoplasm. Together with the chaperonin GroEL, plays an essential role in assisting protein folding. The GroEL-GroES system forms a nano-cage that allows encapsulation of the non-native substrate proteins and provides a physical environment optimized to promote and accelerate protein folding. GroES binds to the apical surface of the GroEL ring, thereby capping the opening of the GroEL channel. The polypeptide is Co-chaperonin GroES (Campylobacter lari (strain RM2100 / D67 / ATCC BAA-1060)).